Here is a 20-residue protein sequence, read N- to C-terminus: Brevinin-1DYa (20 aa).

The cysteines at positions 14 and 20 are disulfide-linked.

Expressed by the skin glands.

The protein localises to the secreted. Antimicrobial peptide. Has low activity against the Gram-positive bacterium S.aureus and the Gram-negative bacterium E.coli (MIC&lt;15 uM). Has a strong hemolytic activity. The sequence is that of Brevinin-1DYa from Rana dybowskii (Dybovsky's frog).